The primary structure comprises 427 residues: 5-hydroxybenzimidazole synthase BzaA (427 aa).

This sequence belongs to the ThiC family. 5-hydroxybenzimidazole synthase subfamily. Requires [4Fe-4S] cluster as cofactor.

It catalyses the reaction 5-amino-1-(5-phospho-beta-D-ribosyl)imidazole + AH2 + S-adenosyl-L-methionine = 5-hydroxybenzimidazole + 5'-deoxyadenosine + formate + L-methionine + A + NH4(+) + phosphate + 2 H(+). It participates in cofactor biosynthesis; adenosylcobalamin biosynthesis. Functionally, together with BzaB, catalyzes the conversion of aminoimidazole ribotide (AIR) to 5-hydroxybenzimidazole (5-HBI) in a radical S-adenosyl-L-methionine (SAM)-dependent reaction. Is thus involved in the anaerobic biosynthesis of dimethylbenzimidazole (DMB), the lower axial ligand of vitamin B12 (cobalamin). Requires BzaB for catalytic activity, as BzaA alone displays no activity. In Eubacterium limosum, this protein is 5-hydroxybenzimidazole synthase BzaA.